The chain runs to 208 residues: ATP-dependent Clp protease proteolytic subunit (208 aa).

Ser105 functions as the Nucleophile in the catalytic mechanism. His130 is a catalytic residue.

It belongs to the peptidase S14 family. Fourteen ClpP subunits assemble into 2 heptameric rings which stack back to back to give a disk-like structure with a central cavity, resembling the structure of eukaryotic proteasomes.

The protein resides in the cytoplasm. It catalyses the reaction Hydrolysis of proteins to small peptides in the presence of ATP and magnesium. alpha-casein is the usual test substrate. In the absence of ATP, only oligopeptides shorter than five residues are hydrolyzed (such as succinyl-Leu-Tyr-|-NHMec, and Leu-Tyr-Leu-|-Tyr-Trp, in which cleavage of the -Tyr-|-Leu- and -Tyr-|-Trp bonds also occurs).. Functionally, cleaves peptides in various proteins in a process that requires ATP hydrolysis. Has a chymotrypsin-like activity. Plays a major role in the degradation of misfolded proteins. The polypeptide is ATP-dependent Clp protease proteolytic subunit (Xylella fastidiosa (strain M12)).